The following is a 2183-amino-acid chain: DNA polymerase epsilon catalytic subunit A (2183 aa).

Residues Cys-2066, Cys-2069, Cys-2090, and Cys-2093 each contribute to the Zn(2+) site. A CysA-type zinc finger spans residues 2066 to 2093 (CFKCKNPCDLDLCKDSCCTKSGFRCPLC). 4 residues coordinate [4Fe-4S] cluster: Cys-2124, Cys-2127, Cys-2139, and Cys-2141. Residues 2124–2141 (CDKCRRVKEYELTEFCPC) carry the CysB motif motif.

It belongs to the DNA polymerase type-B family. Heterotetramer. Consists of 4 subunits: POL2, DPB2, DPB3 and DPB4. [4Fe-4S] cluster is required as a cofactor.

The protein resides in the nucleus. It carries out the reaction DNA(n) + a 2'-deoxyribonucleoside 5'-triphosphate = DNA(n+1) + diphosphate. Its function is as follows. DNA polymerase II participates in chromosomal DNA replication. The sequence is that of DNA polymerase epsilon catalytic subunit A (POL2) from Yarrowia lipolytica (strain CLIB 122 / E 150) (Yeast).